The chain runs to 230 residues: Esterase OVCA2 (230 aa).

Residues S124, D182, and H209 each act as charge relay system in the active site.

Belongs to the LovG family.

It catalyses the reaction a carboxylic ester + H2O = an alcohol + a carboxylate + H(+). Exhibits ester hydrolase activity with a strong preference for long-chain alkyl ester substrates and high selectivity against a variety of short, branched, and substituted esters. Is able to hydrolyze ester bonds within a wide range of p-nitrophenyl derivatives (C2-C14) in vitro, with a strong preference toward substrates of &gt;8 carbons. This is Esterase OVCA2 (ovca2) from Xenopus tropicalis (Western clawed frog).